A 229-amino-acid chain; its full sequence is Orotidine 5'-phosphate decarboxylase (229 aa).

Substrate contacts are provided by residues Asp10, Lys32, 59 to 68 (DLKFHDIPNT), Thr119, Arg180, Gln189, Gly209, and Arg210. The active-site Proton donor is Lys61.

This sequence belongs to the OMP decarboxylase family. Type 1 subfamily. In terms of assembly, homodimer.

It carries out the reaction orotidine 5'-phosphate + H(+) = UMP + CO2. Its pathway is pyrimidine metabolism; UMP biosynthesis via de novo pathway; UMP from orotate: step 2/2. Functionally, catalyzes the decarboxylation of orotidine 5'-monophosphate (OMP) to uridine 5'-monophosphate (UMP). This is Orotidine 5'-phosphate decarboxylase from Legionella pneumophila (strain Lens).